Reading from the N-terminus, the 180-residue chain is Ribulose bisphosphate carboxylase small subunit, chloroplastic (180 aa).

The N-terminal 56 residues, 1 to 56, are a transit peptide targeting the chloroplast; that stretch reads MALISSAAVTTVNRASSAQANLVAPFTGLKSSAGFPVTKKTNNDITSIASNGGRVN.

Belongs to the RuBisCO small chain family. Heterohexadecamer of 8 large and 8 small subunits.

It is found in the plastid. Its subcellular location is the chloroplast. In terms of biological role, ruBisCO catalyzes two reactions: the carboxylation of D-ribulose 1,5-bisphosphate, the primary event in carbon dioxide fixation, as well as the oxidative fragmentation of the pentose substrate. Both reactions occur simultaneously and in competition at the same active site. Although the small subunit is not catalytic it is essential for maximal activity. The protein is Ribulose bisphosphate carboxylase small subunit, chloroplastic of Medicago sativa (Alfalfa).